The primary structure comprises 289 residues: Eukaryotic translation initiation factor 3 subunit G (289 aa).

Disordered regions lie at residues 1–31 (MSRLANSAGDWADDEEFDEAASLPPQQVISN) and 151–199 (DTMA…GEKM). An RRM domain is found at 209–287 (ATLRVTNVSE…LILRVEFAKK (79 aa)).

It belongs to the eIF-3 subunit G family. In terms of assembly, component of the eukaryotic translation initiation factor 3 (eIF-3) complex.

It is found in the cytoplasm. RNA-binding component of the eukaryotic translation initiation factor 3 (eIF-3) complex, which is involved in protein synthesis of a specialized repertoire of mRNAs and, together with other initiation factors, stimulates binding of mRNA and methionyl-tRNAi to the 40S ribosome. The eIF-3 complex specifically targets and initiates translation of a subset of mRNAs involved in cell proliferation. This subunit can bind 18S rRNA. The sequence is that of Eukaryotic translation initiation factor 3 subunit G from Coccidioides immitis (strain RS) (Valley fever fungus).